The chain runs to 305 residues: Probable DNA-invertase y4cG (305 aa).

A Resolvase/invertase-type recombinase catalytic domain is found at 15–148 (RLIGYARVST…SGMQAAKARG (134 aa)). S23 functions as the O-(5'-phospho-DNA)-serine intermediate in the catalytic mechanism.

This sequence belongs to the site-specific recombinase resolvase family.

This is Probable DNA-invertase y4cG from Sinorhizobium fredii (strain NBRC 101917 / NGR234).